The primary structure comprises 285 residues: ATP synthase gamma chain (285 aa).

This sequence belongs to the ATPase gamma chain family. In terms of assembly, F-type ATPases have 2 components, CF(1) - the catalytic core - and CF(0) - the membrane proton channel. CF(1) has five subunits: alpha(3), beta(3), gamma(1), delta(1), epsilon(1). CF(0) has three main subunits: a, b and c.

It is found in the cell membrane. In terms of biological role, produces ATP from ADP in the presence of a proton gradient across the membrane. The gamma chain is believed to be important in regulating ATPase activity and the flow of protons through the CF(0) complex. This is ATP synthase gamma chain from Clostridium novyi (strain NT).